Consider the following 301-residue polypeptide: Envoplakin-like protein (301 aa).

Positions 1 to 88 (MQASADQVER…ERVTQECAEY (88 aa)) form a coiled coil. 2 disordered regions span residues 18 to 41 (RLQQ…TGSS) and 118 to 166 (GLRR…PEPI). A compositionally biased stretch (polar residues) spans 26-41 (SEQSQALQHQQETGSS). The span at 136–151 (GAQHRAEGDQRPRRAA) shows a compositional bias: basic and acidic residues.

It belongs to the plakin or cytolinker family.

This is Envoplakin-like protein (EVPLL) from Homo sapiens (Human).